We begin with the raw amino-acid sequence, 201 residues long: Putative manganese efflux pump MntP 2 (201 aa).

6 consecutive transmembrane segments (helical) span residues 3 to 23, 39 to 59, 65 to 85, 116 to 136, 141 to 161, and 176 to 196; these read LISV…VSIT, IGLF…SIGI, IAAL…GKMI, LILL…SFAF, IINT…IGVM, and ILGG…HTNI.

This sequence belongs to the MntP (TC 9.B.29) family.

It localises to the cell membrane. Probably functions as a manganese efflux pump. This chain is Putative manganese efflux pump MntP 2, found in Clostridium botulinum (strain Langeland / NCTC 10281 / Type F).